The primary structure comprises 446 residues: Chromosomal replication initiator protein DnaA (446 aa).

A domain I, interacts with DnaA modulators region spans residues methionine 1–proline 81. Positions proline 81–serine 109 are domain II. Positions methionine 110 to serine 326 are domain III, AAA+ region. 4 residues coordinate ATP: glycine 154, glycine 156, lysine 157, and threonine 158. Residues serine 327–lysine 446 form a domain IV, binds dsDNA region.

The protein belongs to the DnaA family. In terms of assembly, oligomerizes as a right-handed, spiral filament on DNA at oriC.

It is found in the cytoplasm. Its function is as follows. Plays an essential role in the initiation and regulation of chromosomal replication. ATP-DnaA binds to the origin of replication (oriC) to initiate formation of the DNA replication initiation complex once per cell cycle. Binds the DnaA box (a 9 base pair repeat at the origin) and separates the double-stranded (ds)DNA. Forms a right-handed helical filament on oriC DNA; dsDNA binds to the exterior of the filament while single-stranded (ss)DNA is stabiized in the filament's interior. The ATP-DnaA-oriC complex binds and stabilizes one strand of the AT-rich DNA unwinding element (DUE), permitting loading of DNA polymerase. After initiation quickly degrades to an ADP-DnaA complex that is not apt for DNA replication. Binds acidic phospholipids. This Bacillus cytotoxicus (strain DSM 22905 / CIP 110041 / 391-98 / NVH 391-98) protein is Chromosomal replication initiator protein DnaA.